A 266-amino-acid chain; its full sequence is Thymidylate synthase (266 aa).

Residues arginine 21 and 127–128 (RR) contribute to the dUMP site. The active-site Nucleophile is cysteine 147. DUMP is bound by residues 168–171 (RSAD), asparagine 179, and 209–211 (HIY). Residue aspartate 171 participates in (6R)-5,10-methylene-5,6,7,8-tetrahydrofolate binding. Position 265 (alanine 265) interacts with (6R)-5,10-methylene-5,6,7,8-tetrahydrofolate.

Belongs to the thymidylate synthase family. Bacterial-type ThyA subfamily. As to quaternary structure, homodimer.

The protein resides in the cytoplasm. It catalyses the reaction dUMP + (6R)-5,10-methylene-5,6,7,8-tetrahydrofolate = 7,8-dihydrofolate + dTMP. It participates in pyrimidine metabolism; dTTP biosynthesis. Its function is as follows. Catalyzes the reductive methylation of 2'-deoxyuridine-5'-monophosphate (dUMP) to 2'-deoxythymidine-5'-monophosphate (dTMP) while utilizing 5,10-methylenetetrahydrofolate (mTHF) as the methyl donor and reductant in the reaction, yielding dihydrofolate (DHF) as a by-product. This enzymatic reaction provides an intracellular de novo source of dTMP, an essential precursor for DNA biosynthesis. This Brachyspira hyodysenteriae (strain ATCC 49526 / WA1) protein is Thymidylate synthase.